A 269-amino-acid polypeptide reads, in one-letter code: 3-methyl-2-oxobutanoate hydroxymethyltransferase (269 aa).

Positions 51 and 90 each coordinate Mg(2+). 3-methyl-2-oxobutanoate contacts are provided by residues 51 to 52 (DS), aspartate 90, and lysine 120. Glutamate 122 lines the Mg(2+) pocket. Residue glutamate 187 is the Proton acceptor of the active site.

This sequence belongs to the PanB family. As to quaternary structure, homodecamer; pentamer of dimers. It depends on Mg(2+) as a cofactor.

It localises to the cytoplasm. The catalysed reaction is 3-methyl-2-oxobutanoate + (6R)-5,10-methylene-5,6,7,8-tetrahydrofolate + H2O = 2-dehydropantoate + (6S)-5,6,7,8-tetrahydrofolate. It functions in the pathway cofactor biosynthesis; (R)-pantothenate biosynthesis; (R)-pantoate from 3-methyl-2-oxobutanoate: step 1/2. Its function is as follows. Catalyzes the reversible reaction in which hydroxymethyl group from 5,10-methylenetetrahydrofolate is transferred onto alpha-ketoisovalerate to form ketopantoate. In Tropheryma whipplei (strain TW08/27) (Whipple's bacillus), this protein is 3-methyl-2-oxobutanoate hydroxymethyltransferase.